The following is a 273-amino-acid chain: Release factor glutamine methyltransferase (273 aa).

Residues 109–113, D132, W159, and N176 each bind S-adenosyl-L-methionine; that span reads GTGSG. Substrate is bound at residue 176–179; sequence NPPY.

It belongs to the protein N5-glutamine methyltransferase family. PrmC subfamily.

It catalyses the reaction L-glutaminyl-[peptide chain release factor] + S-adenosyl-L-methionine = N(5)-methyl-L-glutaminyl-[peptide chain release factor] + S-adenosyl-L-homocysteine + H(+). Its function is as follows. Methylates the class 1 translation termination release factors RF1/PrfA and RF2/PrfB on the glutamine residue of the universally conserved GGQ motif. In Neisseria gonorrhoeae (strain ATCC 700825 / FA 1090), this protein is Release factor glutamine methyltransferase.